The primary structure comprises 368 residues: Peptide chain release factor 2 (368 aa).

The residue at position 250 (Q250) is an N5-methylglutamine.

The protein belongs to the prokaryotic/mitochondrial release factor family. In terms of processing, methylated by PrmC. Methylation increases the termination efficiency of RF2.

The protein resides in the cytoplasm. Functionally, peptide chain release factor 2 directs the termination of translation in response to the peptide chain termination codons UGA and UAA. This chain is Peptide chain release factor 2, found in Rickettsia conorii (strain ATCC VR-613 / Malish 7).